The primary structure comprises 243 residues: Venom nerve growth factor (243 aa).

The first 18 residues, 1–18 (MSMLCYTLIIAFLIGIWA), serve as a signal peptide directing secretion. Positions 19 to 125 (APKSEDNVPL…TLNRNIRTKR (107 aa)) are excised as a propeptide. Positions 45–66 (HEGLKTSRNTDQRHLAPKKAED) are disordered. The span at 46-66 (EGLKTSRNTDQRHLAPKKAED) shows a compositional bias: basic and acidic residues. Cystine bridges form between cysteine 139-cysteine 204, cysteine 182-cysteine 232, and cysteine 192-cysteine 234. Asparagine 148 carries an N-linked (GlcNAc...) asparagine glycan.

The protein belongs to the NGF-beta family. Homodimer; non-covalently linked. In terms of tissue distribution, expressed by the venom gland.

Its subcellular location is the secreted. In terms of biological role, nerve growth factor is important for the development and maintenance of the sympathetic and sensory nervous systems. It stimulates division and differentiation of sympathetic and embryonic sensory neurons as well as basal forebrain cholinergic neurons in the brain. Its relevance in the snake venom is not clear. However, it has been shown to inhibit metalloproteinase-dependent proteolysis of platelet glycoprotein Ib alpha, suggesting a metalloproteinase inhibition to prevent metalloprotease autodigestion and/or protection against prey proteases. Binds a lipid between the two protein chains in the homodimer. The lipid-bound form promotes histamine relase from mouse mast cells, contrary to the lipid-free form. The sequence is that of Venom nerve growth factor from Cryptophis nigrescens (Eastern small-eyed snake).